Here is a 159-residue protein sequence, read N- to C-terminus: Ribosomal RNA large subunit methyltransferase H (159 aa).

Residues L76, G108, and 127-132 (FGKLTL) each bind S-adenosyl-L-methionine.

It belongs to the RNA methyltransferase RlmH family. As to quaternary structure, homodimer.

The protein resides in the cytoplasm. The catalysed reaction is pseudouridine(1915) in 23S rRNA + S-adenosyl-L-methionine = N(3)-methylpseudouridine(1915) in 23S rRNA + S-adenosyl-L-homocysteine + H(+). Its function is as follows. Specifically methylates the pseudouridine at position 1915 (m3Psi1915) in 23S rRNA. The protein is Ribosomal RNA large subunit methyltransferase H of Latilactobacillus sakei subsp. sakei (strain 23K) (Lactobacillus sakei subsp. sakei).